The primary structure comprises 465 residues: UPF0422 protein CBU_0937 (465 aa).

The signal sequence occupies residues methionine 1–alanine 23. Positions threonine 28–alanine 60 form a coiled coil.

It belongs to the UPF0422 family.

This is UPF0422 protein CBU_0937 from Coxiella burnetii (strain RSA 493 / Nine Mile phase I).